The following is an 87-amino-acid chain: Toxin Css39.8 (87 aa).

The N-terminal stretch at 1-19 (MNSLLMITACFFLIGTVWA) is a signal peptide. The region spanning 20–85 (KEGYLVNKST…TYPLPNKSCS (66 aa)) is the LCN-type CS-alpha/beta domain. Intrachain disulfides connect cysteine 31/cysteine 84, cysteine 35/cysteine 60, cysteine 44/cysteine 65, and cysteine 48/cysteine 67.

Belongs to the long (4 C-C) scorpion toxin superfamily. Sodium channel inhibitor family. Beta subfamily. Expressed by the venom gland.

It localises to the secreted. Beta toxins bind voltage-independently at site-4 of sodium channels (Nav) and shift the voltage of activation toward more negative potentials thereby affecting sodium channel activation and promoting spontaneous and repetitive firing. This toxin is lethal to crustaceans (freshwater crayfish (Cambarellus montezumae spp.)), it provokes a reversible paralysis to insects (crickets (Achaeta spp.)), but is not toxic to mice. At high concentrations, it does displace the (beta) mammal-specific toxin Cn2 from rat brain synaptosomes. The chain is Toxin Css39.8 from Centruroides suffusus (Durango bark scorpion).